The following is a 409-amino-acid chain: Serine/threonine transporter SstT (409 aa).

Helical transmembrane passes span 17–37 (LVVQ…FFPA), 49–69 (FVSA…MASI), 83–103 (ILLL…IASF), 142–162 (ALIS…GIAF), 180–200 (VSLI…GLVA), 218–238 (LVVL…LIVF), 299–319 (MAGA…TLGI), 331–351 (VVAS…LLLI), and 357–377 (LFGI…IIAI).

The protein belongs to the dicarboxylate/amino acid:cation symporter (DAACS) (TC 2.A.23) family.

It is found in the cell inner membrane. It catalyses the reaction L-serine(in) + Na(+)(in) = L-serine(out) + Na(+)(out). The catalysed reaction is L-threonine(in) + Na(+)(in) = L-threonine(out) + Na(+)(out). Involved in the import of serine and threonine into the cell, with the concomitant import of sodium (symport system). This Pseudomonas paraeruginosa (strain DSM 24068 / PA7) (Pseudomonas aeruginosa (strain PA7)) protein is Serine/threonine transporter SstT.